The sequence spans 104 residues: Replication restart protein PriB (104 aa).

In terms of domain architecture, SSB spans 1 to 101 (MTNRLELSGV…LHADHIEIIC (101 aa)).

Belongs to the PriB family. In terms of assembly, homodimer. Interacts with PriA and DnaT. Component of the replication restart primosome. Primosome assembly occurs via a 'hand-off' mechanism. PriA binds to replication forks, subsequently PriB then DnaT bind; DnaT then displaces ssDNA to generate the helicase loading substrate.

In terms of biological role, involved in the restart of stalled replication forks, which reloads the replicative helicase on sites other than the origin of replication; the PriA-PriB pathway is the major replication restart pathway. During primosome assembly it facilitates complex formation between PriA and DnaT on DNA; stabilizes PriA on DNA. Stimulates the DNA unwinding activity of PriA helicase. In Photobacterium profundum (strain SS9), this protein is Replication restart protein PriB.